We begin with the raw amino-acid sequence, 544 residues long: Chaperonin GroEL 1 (544 aa).

ATP contacts are provided by residues 30–33 (TLGP), Lys51, 87–91 (DGTTT), Gly415, 481–483 (DAL), and Asp497.

This sequence belongs to the chaperonin (HSP60) family. As to quaternary structure, forms a cylinder of 14 subunits composed of two heptameric rings stacked back-to-back. Interacts with the co-chaperonin GroES.

The protein resides in the cytoplasm. It catalyses the reaction ATP + H2O + a folded polypeptide = ADP + phosphate + an unfolded polypeptide.. Functionally, together with its co-chaperonin GroES, plays an essential role in assisting protein folding. The GroEL-GroES system forms a nano-cage that allows encapsulation of the non-native substrate proteins and provides a physical environment optimized to promote and accelerate protein folding. In Chlamydia caviae (strain ATCC VR-813 / DSM 19441 / 03DC25 / GPIC) (Chlamydophila caviae), this protein is Chaperonin GroEL 1.